The sequence spans 77 residues: Exodeoxyribonuclease 7 small subunit (77 aa).

Belongs to the XseB family. In terms of assembly, heterooligomer composed of large and small subunits.

The protein localises to the cytoplasm. The catalysed reaction is Exonucleolytic cleavage in either 5'- to 3'- or 3'- to 5'-direction to yield nucleoside 5'-phosphates.. Bidirectionally degrades single-stranded DNA into large acid-insoluble oligonucleotides, which are then degraded further into small acid-soluble oligonucleotides. The polypeptide is Exodeoxyribonuclease 7 small subunit (Clostridium acetobutylicum (strain ATCC 824 / DSM 792 / JCM 1419 / IAM 19013 / LMG 5710 / NBRC 13948 / NRRL B-527 / VKM B-1787 / 2291 / W)).